The following is a 328-amino-acid chain: tRNA dimethylallyltransferase (328 aa).

10–17 (GPTASGKT) is an ATP binding site. 12–17 (TASGKT) serves as a coordination point for substrate.

The protein belongs to the IPP transferase family. Monomer. Mg(2+) is required as a cofactor.

The enzyme catalyses adenosine(37) in tRNA + dimethylallyl diphosphate = N(6)-dimethylallyladenosine(37) in tRNA + diphosphate. Functionally, catalyzes the transfer of a dimethylallyl group onto the adenine at position 37 in tRNAs that read codons beginning with uridine, leading to the formation of N6-(dimethylallyl)adenosine (i(6)A). The polypeptide is tRNA dimethylallyltransferase (Bifidobacterium longum (strain NCC 2705)).